The chain runs to 338 residues: 1-aminocyclopropane-1-carboxylate deaminase (338 aa).

Position 51 is an N6-(pyridoxal phosphate)lysine (K51). S78 (nucleophile) is an active-site residue.

Belongs to the ACC deaminase/D-cysteine desulfhydrase family. Homotrimer. The cofactor is pyridoxal 5'-phosphate.

The catalysed reaction is 1-aminocyclopropane-1-carboxylate + H2O = 2-oxobutanoate + NH4(+). In terms of biological role, catalyzes a cyclopropane ring-opening reaction, the irreversible conversion of 1-aminocyclopropane-1-carboxylate (ACC) to ammonia and alpha-ketobutyrate. Allows growth on ACC as a nitrogen source. The chain is 1-aminocyclopropane-1-carboxylate deaminase from Ralstonia pickettii (strain 12J).